A 140-amino-acid chain; its full sequence is Large ribosomal subunit protein uL11 (140 aa).

The protein belongs to the universal ribosomal protein uL11 family. In terms of assembly, part of the ribosomal stalk of the 50S ribosomal subunit. Interacts with L10 and the large rRNA to form the base of the stalk. L10 forms an elongated spine to which L12 dimers bind in a sequential fashion forming a multimeric L10(L12)X complex. Post-translationally, one or more lysine residues are methylated.

Functionally, forms part of the ribosomal stalk which helps the ribosome interact with GTP-bound translation factors. This chain is Large ribosomal subunit protein uL11, found in Dehalococcoides mccartyi (strain ATCC BAA-2100 / JCM 16839 / KCTC 5957 / BAV1).